The chain runs to 399 residues: MDLAKTNVGCSDLKFCLARESFASAVSWVAKYLPTRPTVPVLSGVLLTGSDSGLTISGFDYEVSAEVQVAAEIASSGSVLVSGRLLSDITRALPNKPVHFYVDGNRVALTCGSARFSLPTMAVEDYPTLPTLPDETGTLPSDVFAEAIGQVAIAAGRDYTLPMLTGIRIEISGDTVVLAATDRFRLAVRELKWSVLSSDFEASVLVPAKTLVEVAKAGTDGSGVCLSLGAGVGVGKDGLFGISGGGKRSTTRLLDAEFPKFRQLLPAEHTAVATIDVAELTEAIKLVALVADRGAQVRMEFGDGILRLSAGADDVGRAEEDLAVAFTGEPLTIAFNPNYLTDGLASVHSERVSFGFTTPSKPALLRPTSNDDVHPTHDGPFPALPTDYVYLLMPVRLPG.

This sequence belongs to the beta sliding clamp family. As to quaternary structure, forms a ring-shaped head-to-tail homodimer around DNA which binds and tethers DNA polymerases and other proteins to the DNA. The DNA replisome complex has a single clamp-loading complex (3 tau and 1 each of delta, delta', psi and chi subunits) which binds 3 Pol III cores (1 core on the leading strand and 2 on the lagging strand) each with a beta sliding clamp dimer. Additional proteins in the replisome are other copies of gamma, psi and chi, Ssb, DNA helicase and RNA primase.

Its subcellular location is the cytoplasm. Confers DNA tethering and processivity to DNA polymerases and other proteins. Acts as a clamp, forming a ring around DNA (a reaction catalyzed by the clamp-loading complex) which diffuses in an ATP-independent manner freely and bidirectionally along dsDNA. Initially characterized for its ability to contact the catalytic subunit of DNA polymerase III (Pol III), a complex, multichain enzyme responsible for most of the replicative synthesis in bacteria; Pol III exhibits 3'-5' exonuclease proofreading activity. The beta chain is required for initiation of replication as well as for processivity of DNA replication. The polypeptide is Beta sliding clamp (dnaN) (Mycobacterium leprae (strain TN)).